The primary structure comprises 425 residues: Serine hydroxymethyltransferase (425 aa).

(6S)-5,6,7,8-tetrahydrofolate is bound by residues Leu-128 and 132 to 134 (GHL). At Lys-237 the chain carries N6-(pyridoxal phosphate)lysine.

This sequence belongs to the SHMT family. Homodimer. It depends on pyridoxal 5'-phosphate as a cofactor.

Its subcellular location is the cytoplasm. It carries out the reaction (6R)-5,10-methylene-5,6,7,8-tetrahydrofolate + glycine + H2O = (6S)-5,6,7,8-tetrahydrofolate + L-serine. It participates in one-carbon metabolism; tetrahydrofolate interconversion. It functions in the pathway amino-acid biosynthesis; glycine biosynthesis; glycine from L-serine: step 1/1. Functionally, catalyzes the reversible interconversion of serine and glycine with tetrahydrofolate (THF) serving as the one-carbon carrier. This reaction serves as the major source of one-carbon groups required for the biosynthesis of purines, thymidylate, methionine, and other important biomolecules. Also exhibits THF-independent aldolase activity toward beta-hydroxyamino acids, producing glycine and aldehydes, via a retro-aldol mechanism. The protein is Serine hydroxymethyltransferase of Wolbachia sp. subsp. Drosophila simulans (strain wRi).